We begin with the raw amino-acid sequence, 397 residues long: Acetate kinase 2 (397 aa).

Position 10 (Asn-10) interacts with Mg(2+). Lys-17 is an ATP binding site. Position 90 (Arg-90) interacts with substrate. The active-site Proton donor/acceptor is the Asp-147. ATP is bound by residues His-207–Gly-211, Asp-281–Arg-283, and Gly-329–Asn-333. Residue Glu-383 participates in Mg(2+) binding.

The protein belongs to the acetokinase family. In terms of assembly, homodimer. Mg(2+) is required as a cofactor. Mn(2+) serves as cofactor.

Its subcellular location is the cytoplasm. The catalysed reaction is acetate + ATP = acetyl phosphate + ADP. It participates in metabolic intermediate biosynthesis; acetyl-CoA biosynthesis; acetyl-CoA from acetate: step 1/2. In terms of biological role, catalyzes the formation of acetyl phosphate from acetate and ATP. Can also catalyze the reverse reaction. The chain is Acetate kinase 2 from Photobacterium profundum (strain SS9).